A 370-amino-acid chain; its full sequence is tRNA-specific 2-thiouridylase MnmA (370 aa).

Residues 11 to 18 (AMSGGVDS) and Met-37 each bind ATP. Residues 99–101 (NPD) form an interaction with target base in tRNA region. Residue Cys-104 is the Nucleophile of the active site. An intrachain disulfide couples Cys-104 to Cys-201. Gly-129 is a binding site for ATP. Positions 151–153 (KDQ) are interaction with tRNA. Cys-201 functions as the Cysteine persulfide intermediate in the catalytic mechanism. The interaction with tRNA stretch occupies residues 313–314 (RY).

The protein belongs to the MnmA/TRMU family. As to quaternary structure, interacts with TusE.

The protein localises to the cytoplasm. The catalysed reaction is S-sulfanyl-L-cysteinyl-[protein] + uridine(34) in tRNA + AH2 + ATP = 2-thiouridine(34) in tRNA + L-cysteinyl-[protein] + A + AMP + diphosphate + H(+). Functionally, catalyzes the 2-thiolation of uridine at the wobble position (U34) of tRNA(Lys), tRNA(Glu) and tRNA(Gln), leading to the formation of s(2)U34, the first step of tRNA-mnm(5)s(2)U34 synthesis. Sulfur is provided by IscS, via a sulfur-relay system. Binds ATP and its substrate tRNAs. This chain is tRNA-specific 2-thiouridylase MnmA, found in Buchnera aphidicola subsp. Baizongia pistaciae (strain Bp).